The following is a 929-amino-acid chain: Band 4.1-like protein 3 (929 aa).

Methionine 1 bears the N-acetylmethionine mark. The tract at residues 1-72 (MTTESGSDSE…STPVKREIGD (72 aa)) is disordered. Threonine 2 carries the post-translational modification N-acetylthreonine; in Band 4.1-like protein 3, N-terminally processed. Positions 20-33 (QEAAGPQGQAGAQP) are enriched in low complexity. The residue at position 96 (serine 96) is a Phosphoserine. In terms of domain architecture, FERM spans 118 to 399 (MQCKVTLLDG…EHHTFFRLLL (282 aa)). The segment at 402 to 528 (APPKKFLTLG…PVTALRHEGK (127 aa)) is hydrophilic. Phosphoserine occurs at positions 428, 451, and 486. The segment at 490-554 (LITTVTPEKK…TESDQEEDAE (65 aa)) is disordered. Threonine 495 carries the post-translational modification Phosphothreonine. Basic and acidic residues predominate over residues 496–516 (PEKKAEEERVEEEDRRKKAEE). At threonine 518 the chain carries Phosphothreonine. Positions 523 to 536 (LRHEGKTDSERTDT) are enriched in basic and acidic residues. Residues histidine 525 and serine 543 each carry the phosphoserine modification. At threonine 545 the chain carries Phosphothreonine. At serine 547 the chain carries Phosphoserine. The tract at residues 559–602 (DLDKTQDELMKHQTNISELKRTFLETSTETALTNEWEKRLSTSP) is spectrin--actin-binding. Disordered stretches follow at residues 608-630 (RQEDAPMIEPLVPEETKQSSGEK), 665-689 (LETKTEPVEAEVESTPHPQPLSTEK), and 705-807 (VHAS…SPGG). Residue threonine 725 is modified to Phosphothreonine. The span at 726–737 (PTDRRHTGKGKE) shows a compositional bias: basic and acidic residues. The interval 777 to 929 (RTSEGLEQKS…TEITPEDGED (153 aa)) is C-terminal (CTD). Residues 789–802 (ESSTVRVESTSVGS) are compositionally biased toward low complexity. Residues serine 802 and serine 804 each carry the phosphoserine modification. Phosphothreonine is present on threonine 923.

In terms of assembly, interacts (via FERM domain) with CADM1. Interacts (via FERM domain) with PRMT3; the interaction is direct and inhibits the protein-arginine N-methyltransferase activity of PRMT3. Interacts with PRMT5. Interacts with PRMT6. Has the complete spectrin--actin-binding (SAB) domain and fully interacts with spectrin and actin. In terms of tissue distribution, detected in brain (at protein level). Highest expression in brain, lower in testis, adrenal gland, heart and kidney. Also present in muscle and epithelial cells. Isoform 1 is expressed in brain, isoform 2 is expressed in heart and isoform 3 is mostly expressed in kidney but also in heart and brain. Isoform 6 seems to be most abundant in kidney while isoform 4 and isoform 5 are predominantly expressed in heart and brain.

It localises to the cytoplasm. Its subcellular location is the cytoskeleton. The protein resides in the cell membrane. The protein localises to the cell junction. Functionally, tumor suppressor that inhibits cell proliferation and promotes apoptosis. Modulates the activity of protein arginine N-methyltransferases, including PRMT3 and PRMT5. The polypeptide is Band 4.1-like protein 3 (Mus musculus (Mouse)).